The chain runs to 378 residues: Glutamate 5-kinase (378 aa).

Position 19 (lysine 19) interacts with ATP. Substrate contacts are provided by serine 59, aspartate 146, and asparagine 158. Residues 178-179 and 220-226 each bind ATP; these read TD and TGGMATK. Residues 285–363 form the PUA domain; that stretch reads QGQIQVDAGA…GEIGEILGYK (79 aa).

It belongs to the glutamate 5-kinase family.

Its subcellular location is the cytoplasm. It catalyses the reaction L-glutamate + ATP = L-glutamyl 5-phosphate + ADP. Its pathway is amino-acid biosynthesis; L-proline biosynthesis; L-glutamate 5-semialdehyde from L-glutamate: step 1/2. Catalyzes the transfer of a phosphate group to glutamate to form L-glutamate 5-phosphate. In Moorella thermoacetica (strain ATCC 39073 / JCM 9320), this protein is Glutamate 5-kinase.